We begin with the raw amino-acid sequence, 357 residues long: Dual-specificity RNA methyltransferase RlmN (357 aa).

The active-site Proton acceptor is the glutamate 89. One can recognise a Radical SAM core domain in the interval 109–340; that stretch reads EGEKYTVCVS…CTIRESKALD (232 aa). The cysteines at positions 116 and 345 are disulfide-linked. 3 residues coordinate [4Fe-4S] cluster: cysteine 123, cysteine 127, and cysteine 130. S-adenosyl-L-methionine-binding positions include 173–174, serine 203, 226–228, and asparagine 302; these read GE and SLH. Cysteine 345 (S-methylcysteine intermediate) is an active-site residue.

This sequence belongs to the radical SAM superfamily. RlmN family. It depends on [4Fe-4S] cluster as a cofactor.

It is found in the cytoplasm. It carries out the reaction adenosine(2503) in 23S rRNA + 2 reduced [2Fe-2S]-[ferredoxin] + 2 S-adenosyl-L-methionine = 2-methyladenosine(2503) in 23S rRNA + 5'-deoxyadenosine + L-methionine + 2 oxidized [2Fe-2S]-[ferredoxin] + S-adenosyl-L-homocysteine. It catalyses the reaction adenosine(37) in tRNA + 2 reduced [2Fe-2S]-[ferredoxin] + 2 S-adenosyl-L-methionine = 2-methyladenosine(37) in tRNA + 5'-deoxyadenosine + L-methionine + 2 oxidized [2Fe-2S]-[ferredoxin] + S-adenosyl-L-homocysteine. In terms of biological role, specifically methylates position 2 of adenine 2503 in 23S rRNA and position 2 of adenine 37 in tRNAs. m2A2503 modification seems to play a crucial role in the proofreading step occurring at the peptidyl transferase center and thus would serve to optimize ribosomal fidelity. The chain is Dual-specificity RNA methyltransferase RlmN from Helicobacter pylori (strain J99 / ATCC 700824) (Campylobacter pylori J99).